The chain runs to 227 residues: Enolase-phosphatase E1 (227 aa).

Positions 11 and 13 each coordinate Mg(2+). Residues Ser-118–Ser-119 and Lys-161 contribute to the substrate site. Asp-186 contributes to the Mg(2+) binding site.

It belongs to the HAD-like hydrolase superfamily. MasA/MtnC family. As to quaternary structure, monomer. Requires Mg(2+) as cofactor.

Its subcellular location is the cytoplasm. It is found in the nucleus. It catalyses the reaction 5-methylsulfanyl-2,3-dioxopentyl phosphate + H2O = 1,2-dihydroxy-5-(methylsulfanyl)pent-1-en-3-one + phosphate. It functions in the pathway amino-acid biosynthesis; L-methionine biosynthesis via salvage pathway; L-methionine from S-methyl-5-thio-alpha-D-ribose 1-phosphate: step 3/6. Its pathway is amino-acid biosynthesis; L-methionine biosynthesis via salvage pathway; L-methionine from S-methyl-5-thio-alpha-D-ribose 1-phosphate: step 4/6. Functionally, bifunctional enzyme that catalyzes the enolization of 2,3-diketo-5-methylthiopentyl-1-phosphate (DK-MTP-1-P) into the intermediate 2-hydroxy-3-keto-5-methylthiopentenyl-1-phosphate (HK-MTPenyl-1-P), which is then dephosphorylated to form the acireductone 1,2-dihydroxy-3-keto-5-methylthiopentene (DHK-MTPene). The polypeptide is Enolase-phosphatase E1 (Saccharomyces cerevisiae (strain JAY291) (Baker's yeast)).